A 299-amino-acid chain; its full sequence is ATP phosphoribosyltransferase (299 aa).

Belongs to the ATP phosphoribosyltransferase family. Long subfamily. It depends on Mg(2+) as a cofactor.

The protein resides in the cytoplasm. It carries out the reaction 1-(5-phospho-beta-D-ribosyl)-ATP + diphosphate = 5-phospho-alpha-D-ribose 1-diphosphate + ATP. Its pathway is amino-acid biosynthesis; L-histidine biosynthesis; L-histidine from 5-phospho-alpha-D-ribose 1-diphosphate: step 1/9. With respect to regulation, feedback inhibited by histidine. Catalyzes the condensation of ATP and 5-phosphoribose 1-diphosphate to form N'-(5'-phosphoribosyl)-ATP (PR-ATP). Has a crucial role in the pathway because the rate of histidine biosynthesis seems to be controlled primarily by regulation of HisG enzymatic activity. This Campylobacter jejuni subsp. doylei (strain ATCC BAA-1458 / RM4099 / 269.97) protein is ATP phosphoribosyltransferase.